Consider the following 1072-residue polypeptide: Guanylyl cyclase C (1072 aa).

The N-terminal stretch at 1 to 22 is a signal peptide; sequence MTSLLGLAVRLLLFQPTLMFWA. Over 23–429 the chain is Extracellular; sequence SQVRQKCHNG…PNDVPGLGPQ (407 aa). 7 N-linked (GlcNAc...) asparagine glycosylation sites follow: asparagine 31, asparagine 74, asparagine 78, asparagine 187, asparagine 194, asparagine 306, and asparagine 401. A helical transmembrane segment spans residues 430 to 453; it reads ILMIAVFTLTGIVVVLLLIALLVL. The Cytoplasmic segment spans residues 454-1072; that stretch reads RKYRRDHELR…NNSDHDSTYF (619 aa). A Protein kinase domain is found at 488-748; sequence LKIDDDRRRD…KIESTLAKIF (261 aa). One can recognise a Guanylate cyclase domain in the interval 823-953; sequence TIYFSDIVGF…DTVNTASRME (131 aa).

This sequence belongs to the adenylyl cyclase class-4/guanylyl cyclase family. In terms of assembly, homotrimer. Interacts via its C-terminal region with PDZK2. Interacts with the lectin chaperone VIP36. Glycosylation at Asn-74 and/or Asn-78 is required for interaction with VIP36 while glycosylation at Asn-401 modulates ligand-mediated GC-C activation.

The protein resides in the cell membrane. It is found in the endoplasmic reticulum membrane. The catalysed reaction is GTP = 3',5'-cyclic GMP + diphosphate. Functionally, guanylyl cyclase that catalyzes synthesis of cyclic GMP (cGMP) from GTP. Receptor for the E.coli heat-stable enterotoxin; E.coli enterotoxin markedly stimulates the accumulation of cGMP in mammalian cells expressing GUCY2C. The sequence is that of Guanylyl cyclase C (Gucy2c) from Rattus norvegicus (Rat).